The chain runs to 175 residues: LIPDDPDVAAEKARFFRTFKIIEGASKPRGGGIAVRPALPPGADVYTMPRPQPKWMGPLASKVPASLPGSTAFVSETSDVQNARSHFFNTYNAQVAATMPSPDSPTYYYSPSAPAYVPDAPQEKWTGPLASAVPAGLPGSSPVVFDTPEVYNAKAAFFNTYKNQVKAIIPRPSYF.

In terms of tissue distribution, calcified shell.

The sequence is that of Cuticle protein CP1876 from Cancer pagurus (Rock crab).